The following is a 210-amino-acid chain: RNA chaperone ProQ (210 aa).

The disordered stretch occupies residues 118–146 (KAAKPEKKRPARRVAAKGQHAKETTTNKA). Positions 123–132 (EKKRPARRVA) are enriched in basic residues.

The protein belongs to the ProQ family.

It is found in the cytoplasm. In terms of biological role, RNA chaperone with significant RNA binding, RNA strand exchange and RNA duplexing activities. This is RNA chaperone ProQ from Pasteurella multocida (strain Pm70).